A 102-amino-acid chain; its full sequence is Protein Tat (102 aa).

The segment at 1–24 is interaction with human CREBBP; it reads MEPVDPRLEPWKHPGSQPKTACNN. Residues 1–48 are transactivation; sequence MEPVDPRLEPWKHPGSQPKTACNNCYCKKCCYHCQVCFLTKGLGISYG. Zn(2+) is bound by residues cysteine 22, cysteine 25, and cysteine 27. The tract at residues 22 to 37 is cysteine-rich; the sequence is CNNCYCKKCCYHCQVC. An N6-acetyllysine; by host PCAF modification is found at lysine 28. Residues cysteine 30, histidine 33, cysteine 34, and cysteine 37 each coordinate Zn(2+). The segment at 38–48 is core; sequence FLTKGLGISYG. The disordered stretch occupies residues 48–102; the sequence is GRKKRRQRRGPPQGSQTHQVSLSKQPTSQPRGDPTGPKESKEKVERETETDPAVQ. The Nuclear localization signal, RNA-binding (TAR), and protein transduction signature appears at 49–57; that stretch reads RKKRRQRRG. The interaction with the host capping enzyme RNGTT stretch occupies residues 49–86; sequence RKKRRQRRGPPQGSQTHQVSLSKQPTSQPRGDPTGPKE. Residues lysine 50 and lysine 51 each carry the N6-acetyllysine; by host EP300 and GCN5L2 modification. Residues arginine 52 and arginine 53 each carry the asymmetric dimethylarginine; by host PRMT6 modification. Residues 62–77 are compositionally biased toward polar residues; that stretch reads SQTHQVSLSKQPTSQP. Lysine 71 is covalently cross-linked (Glycyl lysine isopeptide (Lys-Gly) (interchain with G-Cter in ubiquitin)). The short motif at 78–80 is the Cell attachment site element; that stretch reads RGD. Residues 83-96 are compositionally biased toward basic and acidic residues; the sequence is GPKESKEKVERETE.

It belongs to the lentiviruses Tat family. In terms of assembly, interacts with host CCNT1. Associates with the P-TEFb complex composed at least of Tat, P-TEFb (CDK9 and CCNT1), TAR RNA, RNA Pol II. Recruits the HATs CREBBP, TAF1/TFIID, EP300, PCAF and GCN5L2. Interacts with host KAT5/Tip60; this interaction targets the latter to degradation. Interacts with the host deacetylase SIRT1. Interacts with host capping enzyme RNGTT; this interaction stimulates RNGTT. Binds to host KDR, and to the host integrins ITGAV/ITGB3 and ITGA5/ITGB1. Interacts with host KPNB1/importin beta-1 without previous binding to KPNA1/importin alpha-1. Interacts with EIF2AK2. Interacts with host nucleosome assembly protein NAP1L1; this interaction may be required for the transport of Tat within the nucleus, since the two proteins interact at the nuclear rim. Interacts with host C1QBP/SF2P32; this interaction involves lysine-acetylated Tat. Interacts with the host chemokine receptors CCR2, CCR3 and CXCR4. Interacts with host DPP4/CD26; this interaction may trigger an anti-proliferative effect. Interacts with host LDLR. Interacts with the host extracellular matrix metalloproteinase MMP1. Interacts with host PRMT6; this interaction mediates Tat's methylation. Interacts with, and is ubiquitinated by MDM2/Hdm2. Interacts with host PSMC3 and HTATIP2. Interacts with STAB1; this interaction may overcome SATB1-mediated repression of IL2 and IL2RA (interleukin) in T cells by binding to the same domain than HDAC1. Interacts (when acetylated) with human CDK13, thereby increasing HIV-1 mRNA splicing and promoting the production of the doubly spliced HIV-1 protein Nef. Interacts with host TBP; this interaction modulates the activity of transcriptional pre-initiation complex. Interacts with host RELA. Interacts with host PLSCR1; this interaction negatively regulates Tat transactivation activity by altering its subcellular distribution. Asymmetrical arginine methylation by host PRMT6 seems to diminish the transactivation capacity of Tat and affects the interaction with host CCNT1. Post-translationally, acetylation by EP300, CREBBP, GCN5L2/GCN5 and PCAF regulates the transactivation activity of Tat. EP300-mediated acetylation of Lys-50 promotes dissociation of Tat from the TAR RNA through the competitive binding to PCAF's bromodomain. In addition, the non-acetylated Tat's N-terminus can also interact with PCAF. PCAF-mediated acetylation of Lys-28 enhances Tat's binding to CCNT1. Lys-50 is deacetylated by SIRT1. In terms of processing, polyubiquitination by host MDM2 does not target Tat to degradation, but activates its transactivation function and fosters interaction with CCNT1 and TAR RNA. Phosphorylated by EIF2AK2 on serine and threonine residues adjacent to the basic region important for TAR RNA binding and function. Phosphorylation of Tat by EIF2AK2 is dependent on the prior activation of EIF2AK2 by dsRNA.

It is found in the host nucleus. It localises to the host nucleolus. The protein resides in the host cytoplasm. The protein localises to the secreted. Its function is as follows. Transcriptional activator that increases RNA Pol II processivity, thereby increasing the level of full-length viral transcripts. Recognizes a hairpin structure at the 5'-LTR of the nascent viral mRNAs referred to as the transactivation responsive RNA element (TAR) and recruits the cyclin T1-CDK9 complex (P-TEFb complex) that will in turn hyperphosphorylate the RNA polymerase II to allow efficient elongation. The CDK9 component of P-TEFb and other Tat-activated kinases hyperphosphorylate the C-terminus of RNA Pol II that becomes stabilized and much more processive. Other factors such as HTATSF1/Tat-SF1, SUPT5H/SPT5, and HTATIP2 are also important for Tat's function. Besides its effect on RNA Pol II processivity, Tat induces chromatin remodeling of proviral genes by recruiting the histone acetyltransferases (HATs) CREBBP, EP300 and PCAF to the chromatin. This also contributes to the increase in proviral transcription rate, especially when the provirus integrates in transcriptionally silent region of the host genome. To ensure maximal activation of the LTR, Tat mediates nuclear translocation of NF-kappa-B by interacting with host RELA. Through its interaction with host TBP, Tat may also modulate transcription initiation. Tat can reactivate a latently infected cell by penetrating in it and transactivating its LTR promoter. In the cytoplasm, Tat is thought to act as a translational activator of HIV-1 mRNAs. In terms of biological role, extracellular circulating Tat can be endocytosed by surrounding uninfected cells via the binding to several surface receptors such as CD26, CXCR4, heparan sulfate proteoglycans (HSPG) or LDLR. Neurons are rarely infected, but they internalize Tat via their LDLR. Through its interaction with nuclear HATs, Tat is potentially able to control the acetylation-dependent cellular gene expression. Modulates the expression of many cellular genes involved in cell survival, proliferation or in coding for cytokines or cytokine receptors. Tat plays a role in T-cell and neurons apoptosis. Tat induced neurotoxicity and apoptosis probably contribute to neuroAIDS. Circulating Tat also acts as a chemokine-like and/or growth factor-like molecule that binds to specific receptors on the surface of the cells, affecting many cellular pathways. In the vascular system, Tat binds to ITGAV/ITGB3 and ITGA5/ITGB1 integrins dimers at the surface of endothelial cells and competes with bFGF for heparin-binding sites, leading to an excess of soluble bFGF. The sequence is that of Protein Tat from Human immunodeficiency virus type 1 group M subtype B (isolate RF/HAT3) (HIV-1).